Here is a 94-residue protein sequence, read N- to C-terminus: MKMANHPRPGDIIQESLDELNVSLREFARAMEIAPSTASRLLTGKAALTPEMAIKLSVVIGSSPQMWLNLQNAWSLAEAEKTVDVSRLRRLVTQ.

In terms of domain architecture, HTH cro/C1-type spans 13–67 (IQESLDELNVSLREFARAMEIAPSTASRLLTGKAALTPEMAIKLSVVIGSSPQMW). The H-T-H motif DNA-binding region spans 24–43 (LREFARAMEIAPSTASRLLT).

Belongs to the VapA/VapI family.

This is an uncharacterized protein from Escherichia coli (strain K12).